We begin with the raw amino-acid sequence, 246 residues long: Ribonuclease PH (246 aa).

The disordered stretch occupies residues 67-87 (NMLPGSTSPRKRRDRSGKVDG). Phosphate is bound by residues R88 and 126–128 (GTR).

This sequence belongs to the RNase PH family. In terms of assembly, homohexameric ring arranged as a trimer of dimers.

It catalyses the reaction tRNA(n+1) + phosphate = tRNA(n) + a ribonucleoside 5'-diphosphate. In terms of biological role, phosphorolytic 3'-5' exoribonuclease that plays an important role in tRNA 3'-end maturation. Removes nucleotide residues following the 3'-CCA terminus of tRNAs; can also add nucleotides to the ends of RNA molecules by using nucleoside diphosphates as substrates, but this may not be physiologically important. Probably plays a role in initiation of 16S rRNA degradation (leading to ribosome degradation) during starvation. The chain is Ribonuclease PH from Rhodopirellula baltica (strain DSM 10527 / NCIMB 13988 / SH1).